The chain runs to 636 residues: Chaperone protein HtpG (636 aa).

The interval 1–329 (MSKEHGAAAE…TEDLPLNISR (329 aa)) is a; substrate-binding. A b region spans residues 330–550 (ETLQENALIA…DGGMTASMEK (221 aa)). The interval 551–636 (LMRVMNKDES…TGWYAEVRKL (86 aa)) is c.

The protein belongs to the heat shock protein 90 family. Homodimer.

It localises to the cytoplasm. Functionally, molecular chaperone. Has ATPase activity. This chain is Chaperone protein HtpG, found in Oleidesulfovibrio alaskensis (strain ATCC BAA-1058 / DSM 17464 / G20) (Desulfovibrio alaskensis).